Reading from the N-terminus, the 741-residue chain is Transketolase, chloroplastic (741 aa).

Residues methionine 1–histidine 19 show a composition bias toward low complexity. The segment at methionine 1–leucine 33 is disordered. Residues methionine 1–alanine 66 constitute a chloroplast transit peptide. Residues leucine 24–leucine 33 show a composition bias toward polar residues. Histidine 103 is a substrate binding site. Thiamine diphosphate contacts are provided by residues histidine 143 and glycine 192–leucine 194. Aspartate 233 provides a ligand contact to Mg(2+). 2 residues coordinate thiamine diphosphate: glycine 234 and asparagine 263. Residues asparagine 263 and isoleucine 265 each coordinate Mg(2+). Residues histidine 340, arginine 434, and serine 461 each contribute to the substrate site. Histidine 340 serves as a coordination point for thiamine diphosphate. Residues glutamate 488 and phenylalanine 515 each coordinate thiamine diphosphate. Glutamate 488 (proton donor) is an active-site residue. The substrate site is built by histidine 539, aspartate 547, and arginine 598.

It belongs to the transketolase family. Homodimer. The cofactor is Mg(2+). Requires Ca(2+) as cofactor. Mn(2+) serves as cofactor. It depends on Co(2+) as a cofactor. Thiamine diphosphate is required as a cofactor.

The protein localises to the plastid. The protein resides in the chloroplast thylakoid membrane. It catalyses the reaction D-sedoheptulose 7-phosphate + D-glyceraldehyde 3-phosphate = aldehydo-D-ribose 5-phosphate + D-xylulose 5-phosphate. The protein operates within carbohydrate biosynthesis; Calvin cycle. Its function is as follows. Catalyzes the reversible transfer of a two-carbon ketol group from fructose-6-phosphate or sedoheptulose-7-phosphate to glyceraldehyde-3-phosphate to yield xylulose-5-phosphate and erythrose-4-phosphate or ribose-5-phosphate, respectively. In Spinacia oleracea (Spinach), this protein is Transketolase, chloroplastic.